The following is a 488-amino-acid chain: Protein nucleotidyltransferase YdiU (488 aa).

Glycine 91, glycine 93, arginine 94, lysine 114, aspartate 126, glycine 127, arginine 177, and arginine 184 together coordinate ATP. Residue aspartate 253 is the Proton acceptor of the active site. The Mg(2+) site is built by asparagine 254 and aspartate 263. Aspartate 263 contributes to the ATP binding site.

This sequence belongs to the SELO family. It depends on Mg(2+) as a cofactor. Mn(2+) serves as cofactor.

It carries out the reaction L-seryl-[protein] + ATP = 3-O-(5'-adenylyl)-L-seryl-[protein] + diphosphate. The enzyme catalyses L-threonyl-[protein] + ATP = 3-O-(5'-adenylyl)-L-threonyl-[protein] + diphosphate. The catalysed reaction is L-tyrosyl-[protein] + ATP = O-(5'-adenylyl)-L-tyrosyl-[protein] + diphosphate. It catalyses the reaction L-histidyl-[protein] + UTP = N(tele)-(5'-uridylyl)-L-histidyl-[protein] + diphosphate. It carries out the reaction L-seryl-[protein] + UTP = O-(5'-uridylyl)-L-seryl-[protein] + diphosphate. The enzyme catalyses L-tyrosyl-[protein] + UTP = O-(5'-uridylyl)-L-tyrosyl-[protein] + diphosphate. Functionally, nucleotidyltransferase involved in the post-translational modification of proteins. It can catalyze the addition of adenosine monophosphate (AMP) or uridine monophosphate (UMP) to a protein, resulting in modifications known as AMPylation and UMPylation. In Bacillus thuringiensis (strain Al Hakam), this protein is Protein nucleotidyltransferase YdiU.